A 199-amino-acid chain; its full sequence is Recombination protein RecR (199 aa).

Residues 57 to 72 form a C4-type zinc finger; sequence CSICGNITESDPCMIC. Positions 80–176 constitute a Toprim domain; that stretch reads SKVVVVEQPK…KVTRLAHGLA (97 aa).

Belongs to the RecR family.

May play a role in DNA repair. It seems to be involved in an RecBC-independent recombinational process of DNA repair. It may act with RecF and RecO. This is Recombination protein RecR from Ligilactobacillus salivarius (strain UCC118) (Lactobacillus salivarius).